The sequence spans 180 residues: Acireductone dioxygenase (180 aa).

Fe(2+) is bound by residues His97, His99, Glu103, and His141. 4 residues coordinate Ni(2+): His97, His99, Glu103, and His141.

This sequence belongs to the acireductone dioxygenase (ARD) family. As to quaternary structure, monomer. Requires Fe(2+) as cofactor. The cofactor is Ni(2+).

The catalysed reaction is 1,2-dihydroxy-5-(methylsulfanyl)pent-1-en-3-one + O2 = 3-(methylsulfanyl)propanoate + CO + formate + 2 H(+). The enzyme catalyses 1,2-dihydroxy-5-(methylsulfanyl)pent-1-en-3-one + O2 = 4-methylsulfanyl-2-oxobutanoate + formate + 2 H(+). The protein operates within amino-acid biosynthesis; L-methionine biosynthesis via salvage pathway; L-methionine from S-methyl-5-thio-alpha-D-ribose 1-phosphate: step 5/6. Functionally, catalyzes 2 different reactions between oxygen and the acireductone 1,2-dihydroxy-3-keto-5-methylthiopentene (DHK-MTPene) depending upon the metal bound in the active site. Fe-containing acireductone dioxygenase (Fe-ARD) produces formate and 2-keto-4-methylthiobutyrate (KMTB), the alpha-ketoacid precursor of methionine in the methionine recycle pathway. Ni-containing acireductone dioxygenase (Ni-ARD) produces methylthiopropionate, carbon monoxide and formate, and does not lie on the methionine recycle pathway. The chain is Acireductone dioxygenase from Citrobacter koseri (strain ATCC BAA-895 / CDC 4225-83 / SGSC4696).